A 252-amino-acid polypeptide reads, in one-letter code: Type III pantothenate kinase (252 aa).

6–13 (DIGNTTTE) lines the ATP pocket. Substrate-binding positions include Tyr100 and 107-110 (GADR). The Proton acceptor role is filled by Asp109. Asp129 provides a ligand contact to K(+). An ATP-binding site is contributed by Thr132. Thr184 lines the substrate pocket.

It belongs to the type III pantothenate kinase family. Homodimer. NH4(+) serves as cofactor. It depends on K(+) as a cofactor.

The protein resides in the cytoplasm. It carries out the reaction (R)-pantothenate + ATP = (R)-4'-phosphopantothenate + ADP + H(+). It functions in the pathway cofactor biosynthesis; coenzyme A biosynthesis; CoA from (R)-pantothenate: step 1/5. Its function is as follows. Catalyzes the phosphorylation of pantothenate (Pan), the first step in CoA biosynthesis. The sequence is that of Type III pantothenate kinase from Sulfurihydrogenibium sp. (strain YO3AOP1).